A 425-amino-acid polypeptide reads, in one-letter code: MHKILIRNNYKPLVGKIKINGSKNAVLPIMAASLLSSSSVILHNVPDLIDVHLMSKLLESLGAEVNFMHNKNYKANHTLKIDCSNINNHVMPYKTASKLRTSFLILGPMLSRFGKARTAFPGGCNIGKRPVDMHIKALEEMGAKIEIDGYNIIATVKGKLQGKEITFEKISVGATENVIMAATFAEGVTTINNAATEPEVLDLIDFLKKMGADIEIDNTKVIITGVEALNGCVHKIIPDRIEAGTYALAAIITGGKLELEGINLSDIRCITNELETIGAMVELYDGGIVISRKNGSIKSANVATDPYPNFPSDMQPQLMSAMCIADGISVIEENIFENRFTHADELRKLGANISIEKSKATISGIKSLSGANLYATDLRSTAALVLASLVAGGETIINNSHHLWRGYEAMHEKLNSCGADISISS.

23–24 (KN) lines the phosphoenolpyruvate pocket. Arg-100 provides a ligand contact to UDP-N-acetyl-alpha-D-glucosamine. Cys-124 serves as the catalytic Proton donor. Residue Cys-124 is modified to 2-(S-cysteinyl)pyruvic acid O-phosphothioketal. The UDP-N-acetyl-alpha-D-glucosamine site is built by Asp-313 and Ile-335.

Belongs to the EPSP synthase family. MurA subfamily.

It localises to the cytoplasm. It carries out the reaction phosphoenolpyruvate + UDP-N-acetyl-alpha-D-glucosamine = UDP-N-acetyl-3-O-(1-carboxyvinyl)-alpha-D-glucosamine + phosphate. Its pathway is cell wall biogenesis; peptidoglycan biosynthesis. Cell wall formation. Adds enolpyruvyl to UDP-N-acetylglucosamine. The protein is UDP-N-acetylglucosamine 1-carboxyvinyltransferase of Wolbachia pipientis wMel.